The primary structure comprises 580 residues: Cytochrome c oxidase subunit 1 (580 aa).

The tract at residues 1-25 (MTAVAPRVDGHVAPQRPEPTGHARK) is disordered. The helical transmembrane segment at 43-63 (IMYIIMSFSFFFLGGLMALLI) threads the bilayer. Histidine 87 lines the Fe(II)-heme a pocket. A run of 6 helical transmembrane segments spans residues 90–110 (VMLL…VLPL), 122–142 (LNAF…AGFL), 171–191 (MWII…INML), 214–234 (IFVT…AALG), 259–279 (LFWF…FGII), and 292–312 (FGYI…MAVW). Cu cation-binding residues include histidine 265 and tyrosine 269. The 1'-histidyl-3'-tyrosine (His-Tyr) cross-link spans 265 to 269 (HPEVY). Cu cation contacts are provided by histidine 314 and histidine 315. Helical transmembrane passes span 316 to 336 (MFVT…LISV) and 360 to 380 (MIWA…GIML). Histidine 398 contributes to the heme a3 binding site. The next 3 helical transmembrane spans lie at 399 to 419 (FHYT…YFWF), 434 to 454 (IHFW…HWLG), and 477 to 497 (ISTI…WNVF). Histidine 400 contributes to the Fe(II)-heme a binding site.

It belongs to the heme-copper respiratory oxidase family. As to quaternary structure, associates with subunits II, III and IV to form cytochrome c oxidase. Cu(2+) is required as a cofactor. It depends on heme as a cofactor.

The protein resides in the cell membrane. It carries out the reaction 4 Fe(II)-[cytochrome c] + O2 + 8 H(+)(in) = 4 Fe(III)-[cytochrome c] + 2 H2O + 4 H(+)(out). It functions in the pathway energy metabolism; oxidative phosphorylation. Its function is as follows. Cytochrome c oxidase is the component of the respiratory chain that catalyzes the reduction of oxygen to water. Subunits 1-3 form the functional core of the enzyme complex. CO I is the catalytic subunit of the enzyme. Electrons originating in cytochrome c are transferred via the copper A center of subunit 2 and heme A of subunit 1 to the bimetallic center formed by heme A3 and copper B. In Corynebacterium efficiens (strain DSM 44549 / YS-314 / AJ 12310 / JCM 11189 / NBRC 100395), this protein is Cytochrome c oxidase subunit 1 (ctaD).